We begin with the raw amino-acid sequence, 122 residues long: Large ribosomal subunit protein uL14 (122 aa).

Belongs to the universal ribosomal protein uL14 family. In terms of assembly, part of the 50S ribosomal subunit. Forms a cluster with proteins L3 and L19. In the 70S ribosome, L14 and L19 interact and together make contacts with the 16S rRNA in bridges B5 and B8.

Functionally, binds to 23S rRNA. Forms part of two intersubunit bridges in the 70S ribosome. In Corynebacterium aurimucosum (strain ATCC 700975 / DSM 44827 / CIP 107346 / CN-1) (Corynebacterium nigricans), this protein is Large ribosomal subunit protein uL14.